Consider the following 198-residue polypeptide: Nucleoid occlusion factor SlmA (198 aa).

The HTH tetR-type domain occupies 10-70 (NRREEILQSL…SLIEFIEDSL (61 aa)). Positions 33 to 52 (TTAKLAASVGVSEAALYRHF) form a DNA-binding region, H-T-H motif. Residues 117 to 144 (EQDRLQGRINQLFERIEAQLRQVLREKR) are a coiled coil.

The protein belongs to the nucleoid occlusion factor SlmA family. Homodimer. Interacts with FtsZ.

Its subcellular location is the cytoplasm. The protein localises to the nucleoid. In terms of biological role, required for nucleoid occlusion (NO) phenomenon, which prevents Z-ring formation and cell division over the nucleoid. Acts as a DNA-associated cell division inhibitor that binds simultaneously chromosomal DNA and FtsZ, and disrupts the assembly of FtsZ polymers. SlmA-DNA-binding sequences (SBS) are dispersed on non-Ter regions of the chromosome, preventing FtsZ polymerization at these regions. The sequence is that of Nucleoid occlusion factor SlmA from Citrobacter koseri (strain ATCC BAA-895 / CDC 4225-83 / SGSC4696).